Here is a 225-residue protein sequence, read N- to C-terminus: PKHD-type hydroxylase YbiX (225 aa).

Residues 78–177 form the Fe2OG dioxygenase domain; the sequence is TLSTPLFNRY…RVASFMWIQS (100 aa). 3 residues coordinate Fe cation: histidine 96, aspartate 98, and histidine 158. Residue arginine 168 participates in 2-oxoglutarate binding.

The cofactor is Fe(2+). Requires L-ascorbate as cofactor.

The chain is PKHD-type hydroxylase YbiX from Escherichia coli O6:H1 (strain CFT073 / ATCC 700928 / UPEC).